We begin with the raw amino-acid sequence, 134 residues long: STAG3-like protein 3 (134 aa).

In terms of domain architecture, SCD spans 10-95 (PKVTCRDVLP…GCFKDWMVSM (86 aa)).

Belongs to the SCC3 family.

It localises to the nucleus. The chain is STAG3-like protein 3 (STAG3L3) from Homo sapiens (Human).